The chain runs to 77 residues: Acyl carrier protein (77 aa).

The Carrier domain maps to Met1–Gln76. Ser36 carries the O-(pantetheine 4'-phosphoryl)serine modification.

Belongs to the acyl carrier protein (ACP) family. 4'-phosphopantetheine is transferred from CoA to a specific serine of apo-ACP by AcpS. This modification is essential for activity because fatty acids are bound in thioester linkage to the sulfhydryl of the prosthetic group.

Its subcellular location is the cytoplasm. It participates in lipid metabolism; fatty acid biosynthesis. Its function is as follows. Carrier of the growing fatty acid chain in fatty acid biosynthesis. The sequence is that of Acyl carrier protein from Sulfurihydrogenibium sp. (strain YO3AOP1).